The sequence spans 260 residues: Beta-lactamase SHV-6 (260 aa).

The N-terminal stretch at 1–11 (LLATLPLAVHA) is a signal peptide. Residue serine 56 is the Acyl-ester intermediate of the active site. A disulfide bridge connects residues cysteine 63 and cysteine 109. Catalysis depends on glutamate 154, which acts as the Proton acceptor. 220–222 (KTG) is a binding site for substrate.

Belongs to the class-A beta-lactamase family.

It catalyses the reaction a beta-lactam + H2O = a substituted beta-amino acid. SHV enzymes hydrolyze broad spectrum cephalosporins notably cefotaxime and ceftazidime. The sequence is that of Beta-lactamase SHV-6 (bla) from Klebsiella pneumoniae.